The following is a 427-amino-acid chain: Histidinol dehydrogenase (427 aa).

NAD(+) contacts are provided by Tyr-125, Gln-186, and Asn-209. Residues Ser-234, Gln-256, and His-259 each contribute to the substrate site. Residues Gln-256 and His-259 each coordinate Zn(2+). Catalysis depends on proton acceptor residues Glu-325 and His-326. Substrate contacts are provided by His-326, Asp-359, Glu-413, and His-419. Asp-359 contributes to the Zn(2+) binding site. Zn(2+) is bound at residue His-419.

It belongs to the histidinol dehydrogenase family. It depends on Zn(2+) as a cofactor.

It catalyses the reaction L-histidinol + 2 NAD(+) + H2O = L-histidine + 2 NADH + 3 H(+). It functions in the pathway amino-acid biosynthesis; L-histidine biosynthesis; L-histidine from 5-phospho-alpha-D-ribose 1-diphosphate: step 9/9. In terms of biological role, catalyzes the sequential NAD-dependent oxidations of L-histidinol to L-histidinaldehyde and then to L-histidine. The chain is Histidinol dehydrogenase from Leptospira interrogans serogroup Icterohaemorrhagiae serovar copenhageni (strain Fiocruz L1-130).